The primary structure comprises 356 residues: UDP-N-acetylglucosamine--N-acetylmuramyl-(pentapeptide) pyrophosphoryl-undecaprenol N-acetylglucosamine transferase (356 aa).

UDP-N-acetyl-alpha-D-glucosamine is bound by residues 12–14, N124, R163, S188, I242, 261–266, and Q287; these read TGG and ALTVCE.

The protein belongs to the glycosyltransferase 28 family. MurG subfamily.

Its subcellular location is the cell inner membrane. The catalysed reaction is di-trans,octa-cis-undecaprenyl diphospho-N-acetyl-alpha-D-muramoyl-L-alanyl-D-glutamyl-meso-2,6-diaminopimeloyl-D-alanyl-D-alanine + UDP-N-acetyl-alpha-D-glucosamine = di-trans,octa-cis-undecaprenyl diphospho-[N-acetyl-alpha-D-glucosaminyl-(1-&gt;4)]-N-acetyl-alpha-D-muramoyl-L-alanyl-D-glutamyl-meso-2,6-diaminopimeloyl-D-alanyl-D-alanine + UDP + H(+). Its pathway is cell wall biogenesis; peptidoglycan biosynthesis. Its function is as follows. Cell wall formation. Catalyzes the transfer of a GlcNAc subunit on undecaprenyl-pyrophosphoryl-MurNAc-pentapeptide (lipid intermediate I) to form undecaprenyl-pyrophosphoryl-MurNAc-(pentapeptide)GlcNAc (lipid intermediate II). This Stutzerimonas stutzeri (strain A1501) (Pseudomonas stutzeri) protein is UDP-N-acetylglucosamine--N-acetylmuramyl-(pentapeptide) pyrophosphoryl-undecaprenol N-acetylglucosamine transferase.